The sequence spans 146 residues: Leghemoglobin 1 (146 aa).

Residues 2 to 146 (GFTAQQDALV…LAAAIKKAMS (145 aa)) enclose the Globin domain. 2 positions are modified to phosphoserine; by CCAMK: Ser13 and Ser14. Residue Tyr30 is modified to Nitrated tyrosine. Ser45 and Ser55 each carry phosphoserine; by CCAMK. Ser45 contacts heme b. Residue His61 coordinates O2. Positions 64, 93, and 96 each coordinate heme b. At Ser123 the chain carries Phosphoserine; by CCAMK. Tyr134 carries the post-translational modification Nitrated tyrosine.

Belongs to the plant globin family. As to quaternary structure, monomer. Post-translationally, nitrated in effective nodules and particularly in hypoxic conditions; this mechanism may play a protective role in the symbiosis by buffering toxic peroxynitrite NO(2)(-). Nitration level decrease during nodule senescence. Phosphorylated by CCAMK at serine residues in a Ca(2+)-dependent manner; the phosphorylation at Ser-45 disrupts the molecular environment of its porphyrin ring oxygen binding pocket, thus leading to a reduced oxygen consumption and to the delivery of oxygen O(2) to symbiosomes. In terms of tissue distribution, specifically and strongly expressed in root nodules and at low levels in seedlings.

Its subcellular location is the cytoplasm. It localises to the cytosol. The protein localises to the nucleus. Functionally, leghemoglobin that reversibly binds oxygen O(2) through a pentacoordinated heme iron. In root nodules, facilitates the diffusion of oxygen to the bacteroids while preventing the bacterial nitrogenase from being inactivated by buffering dioxygen, nitric oxide and carbon monoxide, and promoting the formation of reactive oxygen species (ROS, e.g. H(2)O(2)). This role is essential for symbiotic nitrogen fixation (SNF). This is Leghemoglobin 1 from Lotus japonicus (Lotus corniculatus var. japonicus).